The chain runs to 175 residues: Disulfide bond formation protein B 2 (175 aa).

The Cytoplasmic segment spans residues 1–9 (MYLARTRFL). Residues 10-26 (FFLASLACASIIGVAFY) traverse the membrane as a helical segment. The Periplasmic segment spans residues 27-44 (LQQAVGLDPCTLCMVQRA). Cysteine 36 and cysteine 39 are joined by a disulfide. The chain crosses the membrane as a helical span at residues 45–61 (AFIACGVLALCAACHAP). At 62 to 68 (GPTGTRR) the chain is on the cytoplasmic side. The helical transmembrane segment at 69–85 (YSLGLLLVALAGLAGAG) threads the bilayer. Topologically, residues 86–142 (TQVWLQTASADQLIPFITRLEQILSLLSLDMCIDRLRSDALFCAEITWTLFGISLPE) are periplasmic. A helical transmembrane segment spans residues 143 to 161 (WSLLAFTGLALLPLYPLFS). Topologically, residues 162 to 175 (ELSHWLATRDRGGY) are cytoplasmic.

The protein belongs to the DsbB family.

Its subcellular location is the cell inner membrane. Required for disulfide bond formation in some periplasmic proteins. Acts by oxidizing the DsbA protein. This is Disulfide bond formation protein B 2 from Pseudomonas syringae pv. syringae (strain B728a).